The following is a 417-amino-acid chain: NADH-quinone oxidoreductase subunit D (417 aa).

Belongs to the complex I 49 kDa subunit family. NDH-1 is composed of 14 different subunits. Subunits NuoB, C, D, E, F, and G constitute the peripheral sector of the complex.

It is found in the cell inner membrane. It carries out the reaction a quinone + NADH + 5 H(+)(in) = a quinol + NAD(+) + 4 H(+)(out). Functionally, NDH-1 shuttles electrons from NADH, via FMN and iron-sulfur (Fe-S) centers, to quinones in the respiratory chain. The immediate electron acceptor for the enzyme in this species is believed to be ubiquinone. Couples the redox reaction to proton translocation (for every two electrons transferred, four hydrogen ions are translocated across the cytoplasmic membrane), and thus conserves the redox energy in a proton gradient. This is NADH-quinone oxidoreductase subunit D from Burkholderia thailandensis (strain ATCC 700388 / DSM 13276 / CCUG 48851 / CIP 106301 / E264).